Here is a 349-residue protein sequence, read N- to C-terminus: Fe(3+) ions import ATP-binding protein FbpC (349 aa).

The ABC transporter domain occupies 4–236 (LELHHIGKSY…PVDEPTATFL (233 aa)). 36–43 (GPSGSGKT) is an ATP binding site.

The protein belongs to the ABC transporter superfamily. Fe(3+) ion importer (TC 3.A.1.10) family. The complex is composed of two ATP-binding proteins (FbpC), two transmembrane proteins (FbpB) and a solute-binding protein (FbpA).

It localises to the cell inner membrane. It carries out the reaction Fe(3+)(out) + ATP + H2O = Fe(3+)(in) + ADP + phosphate + H(+). Functionally, part of the ABC transporter complex FbpABC involved in Fe(3+) ions import. Responsible for energy coupling to the transport system. The polypeptide is Fe(3+) ions import ATP-binding protein FbpC (Yersinia pestis bv. Antiqua (strain Antiqua)).